The chain runs to 83 residues: uncharacterized protein (83 aa).

Helical transmembrane passes span 23-43 (GGCY…SAIA) and 49-69 (SLWW…VVYG).

It localises to the cell membrane. This is an uncharacterized protein from Mycobacterium tuberculosis (strain CDC 1551 / Oshkosh).